We begin with the raw amino-acid sequence, 310 residues long: D-alanine--D-alanine ligase (310 aa).

Residues 107–305 enclose the ATP-grasp domain; that stretch reads KKVWQSAGLP…FSALVQSILA (199 aa). ATP is bound at residue 134–189; it reads EQLHCQDFVIKPALEGSSVGVSRVKNQEQLAAAIPFAGGARAKIMAEPWIVGRELT. 3 residues coordinate Mg(2+): Asp259, Glu272, and Asn274.

Belongs to the D-alanine--D-alanine ligase family. Requires Mg(2+) as cofactor. Mn(2+) serves as cofactor.

It localises to the cytoplasm. It carries out the reaction 2 D-alanine + ATP = D-alanyl-D-alanine + ADP + phosphate + H(+). It functions in the pathway cell wall biogenesis; peptidoglycan biosynthesis. Its function is as follows. Cell wall formation. This chain is D-alanine--D-alanine ligase, found in Dichelobacter nodosus (strain VCS1703A).